Consider the following 685-residue polypeptide: DNA ligase (685 aa).

NAD(+) contacts are provided by residues 47–51 (DSEYD), 96–97 (SL), and Glu125. Lys127 functions as the N6-AMP-lysine intermediate in the catalytic mechanism. The NAD(+) site is built by Arg148, Glu185, Lys304, and Lys328. The Zn(2+) site is built by Cys422, Cys425, Cys440, and Cys446. Residues 605–685 (AEAQPLKGQT…ELLALLAANA (81 aa)) enclose the BRCT domain.

This sequence belongs to the NAD-dependent DNA ligase family. LigA subfamily. The cofactor is Mg(2+). Mn(2+) serves as cofactor.

It catalyses the reaction NAD(+) + (deoxyribonucleotide)n-3'-hydroxyl + 5'-phospho-(deoxyribonucleotide)m = (deoxyribonucleotide)n+m + AMP + beta-nicotinamide D-nucleotide.. Its function is as follows. DNA ligase that catalyzes the formation of phosphodiester linkages between 5'-phosphoryl and 3'-hydroxyl groups in double-stranded DNA using NAD as a coenzyme and as the energy source for the reaction. It is essential for DNA replication and repair of damaged DNA. This Shewanella baltica (strain OS223) protein is DNA ligase.